Here is a 416-residue protein sequence, read N- to C-terminus: Prostacyclin receptor (416 aa).

Residues 1-45 (MVASGGRPDGPPSITPESPLIVGGREWQGMAGSCWNITYVQDSVG) lie on the Extracellular side of the membrane. 2 cysteine pairs are disulfide-bonded: Cys34–Cys194 and Cys121–Cys199. Asn36 carries an N-linked (GlcNAc...) asparagine glycan. Residues 46-67 (PATSTLMFVAGVVGNGLALGIL) traverse the membrane as a helical segment. At 68–80 (GARRRSHPSAFAV) the chain is on the cytoplasmic side. Residues 81-105 (LVTGLAVTDLLGTCFLSPAVFVAYA) form a helical membrane-spanning segment. Residues 106 to 123 (RNSSLLGLAHGGTMLCDT) are Extracellular-facing. A helical transmembrane segment spans residues 124-144 (FAFAMTFFGLASTLILFAMAV). Over 145–163 (ERCLALSHPYLYAQLDGPR) the chain is Cytoplasmic. The chain crosses the membrane as a helical span at residues 164–187 (CARLALPAIYAFCCLFCSLPLLGL). Residues 188-215 (GEHQQYCPGSWCFIRMRSPQPGGCAFSL) lie on the Extracellular side of the membrane. Residues 216–237 (AYASLMALLVTSIFFCNGSVTL) traverse the membrane as a helical segment. Topologically, residues 238–264 (SLCHMYRQQRRHHGSFVPTSRAREDEV) are cytoplasmic. The chain crosses the membrane as a helical span at residues 265-289 (YHLILLALMTGIMAVCSLPLTIRGF). Residues 290 to 302 (TQAIAPDSREMGD) lie on the Extracellular side of the membrane. The chain crosses the membrane as a helical span at residues 303–323 (LHAFRFNAFNPILDPWVFILF). The Cytoplasmic portion of the chain corresponds to 324–416 (RKAVFQRLKF…TEAVVACSLC (93 aa)). At Ser366 the chain carries Phosphoserine. Cys413 carries the cysteine methyl ester modification. Cys413 is lipidated: S-farnesyl cysteine. A propeptide spans 414–416 (SLC) (removed in mature form).

It belongs to the G-protein coupled receptor 1 family. As to quaternary structure, interacts (non-isoprenylated C-terminus) with PDZK1. Isoprenylation does not influence ligand binding but is required for efficient coupling to the effectors adenylyl cyclase and phospholipase C.

The protein localises to the cell membrane. In terms of biological role, receptor for prostacyclin (prostaglandin I2 or PGI2). The activity of this receptor is mediated by G(s) proteins which activate adenylate cyclase. The sequence is that of Prostacyclin receptor (Ptgir) from Rattus norvegicus (Rat).